The chain runs to 156 residues: D-aminoacyl-tRNA deacylase (156 aa).

Positions 142–143 (GP) match the Gly-cisPro motif, important for rejection of L-amino acids motif.

The protein belongs to the DTD family. As to quaternary structure, homodimer.

Its subcellular location is the cytoplasm. It catalyses the reaction glycyl-tRNA(Ala) + H2O = tRNA(Ala) + glycine + H(+). It carries out the reaction a D-aminoacyl-tRNA + H2O = a tRNA + a D-alpha-amino acid + H(+). An aminoacyl-tRNA editing enzyme that deacylates mischarged D-aminoacyl-tRNAs. Also deacylates mischarged glycyl-tRNA(Ala), protecting cells against glycine mischarging by AlaRS. Acts via tRNA-based rather than protein-based catalysis; rejects L-amino acids rather than detecting D-amino acids in the active site. By recycling D-aminoacyl-tRNA to D-amino acids and free tRNA molecules, this enzyme counteracts the toxicity associated with the formation of D-aminoacyl-tRNA entities in vivo and helps enforce protein L-homochirality. The protein is D-aminoacyl-tRNA deacylase of Cupriavidus pinatubonensis (strain JMP 134 / LMG 1197) (Cupriavidus necator (strain JMP 134)).